Here is a 163-residue protein sequence, read N- to C-terminus: Lipoprotein signal peptidase (163 aa).

The next 4 helical transmembrane spans lie at 9 to 29 (AWPWLWLSVLVILLDQLSKYL), 42 to 62 (ILPFLNFTLNYNTGAAFSFLG), 67 to 87 (WQIIFFAAISFVVSIFLILWL), and 93 to 113 (SEIMMSLGLSLIIGGALGNFI). Catalysis depends on residues Asp123 and Asp141. A helical membrane pass occupies residues 137 to 157 (FNVADSAICVGVFLLIVYMLL).

This sequence belongs to the peptidase A8 family.

The protein resides in the cell inner membrane. The catalysed reaction is Release of signal peptides from bacterial membrane prolipoproteins. Hydrolyzes -Xaa-Yaa-Zaa-|-(S,diacylglyceryl)Cys-, in which Xaa is hydrophobic (preferably Leu), and Yaa (Ala or Ser) and Zaa (Gly or Ala) have small, neutral side chains.. The protein operates within protein modification; lipoprotein biosynthesis (signal peptide cleavage). Its function is as follows. This protein specifically catalyzes the removal of signal peptides from prolipoproteins. In Coxiella burnetii (strain Dugway 5J108-111), this protein is Lipoprotein signal peptidase.